Reading from the N-terminus, the 211-residue chain is Protein FAM167A (211 aa).

2 disordered regions span residues 1–30 (MSVP…DHLR) and 56–108 (EEQT…GKLE). A coiled-coil region spans residues 120–153 (LRKELMEMRLQDQQLARQLMRLRSDIHKLKIEQT).

Belongs to the FAM167 (SEC) family.

The protein is Protein FAM167A (FAM167A) of Bos taurus (Bovine).